Consider the following 495-residue polypeptide: UDP-N-acetylmuramoyl-L-alanyl-D-glutamate--2,6-diaminopimelate ligase (495 aa).

Residues L32 and S34 each contribute to the UDP-N-acetyl-alpha-D-muramoyl-L-alanyl-D-glutamate site. Residue 119–125 participates in ATP binding; sequence GTNGKTT. UDP-N-acetyl-alpha-D-muramoyl-L-alanyl-D-glutamate-binding positions include N160, 161–162, S188, Q194, and R196; that span reads TT. K228 is subject to N6-carboxylysine. Meso-2,6-diaminopimelate is bound by residues R390, 414–417, G465, and E469; that span reads DNPR. Residues 414 to 417 carry the Meso-diaminopimelate recognition motif motif; that stretch reads DNPR.

It belongs to the MurCDEF family. MurE subfamily. Mg(2+) serves as cofactor. Carboxylation is probably crucial for Mg(2+) binding and, consequently, for the gamma-phosphate positioning of ATP.

Its subcellular location is the cytoplasm. The enzyme catalyses UDP-N-acetyl-alpha-D-muramoyl-L-alanyl-D-glutamate + meso-2,6-diaminopimelate + ATP = UDP-N-acetyl-alpha-D-muramoyl-L-alanyl-gamma-D-glutamyl-meso-2,6-diaminopimelate + ADP + phosphate + H(+). It participates in cell wall biogenesis; peptidoglycan biosynthesis. Its function is as follows. Catalyzes the addition of meso-diaminopimelic acid to the nucleotide precursor UDP-N-acetylmuramoyl-L-alanyl-D-glutamate (UMAG) in the biosynthesis of bacterial cell-wall peptidoglycan. This chain is UDP-N-acetylmuramoyl-L-alanyl-D-glutamate--2,6-diaminopimelate ligase, found in Vibrio cholerae serotype O1 (strain ATCC 39315 / El Tor Inaba N16961).